We begin with the raw amino-acid sequence, 186 residues long: Putative transcriptional regulator encoded by LINC00473 (186 aa).

Positions methionine 1–alanine 62 are disordered. Residues phenylalanine 18 to methionine 40 are compositionally biased toward basic and acidic residues.

May play a role in cAMP-mediated gene transcription. This is Putative transcriptional regulator encoded by LINC00473 (LINC00473) from Homo sapiens (Human).